Reading from the N-terminus, the 378-residue chain is Protein RecA (378 aa).

Residue 79 to 86 coordinates ATP; the sequence is GPESSGKT.

It belongs to the RecA family.

It is found in the cytoplasm. Its function is as follows. Can catalyze the hydrolysis of ATP in the presence of single-stranded DNA, the ATP-dependent uptake of single-stranded DNA by duplex DNA, and the ATP-dependent hybridization of homologous single-stranded DNAs. It interacts with LexA causing its activation and leading to its autocatalytic cleavage. The polypeptide is Protein RecA (Streptococcus equi subsp. zooepidemicus (strain MGCS10565)).